The primary structure comprises 570 residues: Berberine bridge enzyme-like 19 (570 aa).

The signal sequence occupies residues 1-30 (MLTTPPRTFVSVPFFFFFLLFLSLPLSSFS). A disulfide bridge connects residues cysteine 42 and cysteine 105. Asparagine 80 carries N-linked (GlcNAc...) asparagine glycosylation. The FAD-binding PCMH-type domain maps to 83–257 (STLKPTIIIT…LGYKVKLVPV (175 aa)). Positions 120-182 (HDYDGLSYIS…RVHGFPAGVC (63 aa)) form a cross-link, 6-(S-cysteinyl)-8alpha-(pros-histidyl)-FAD (His-Cys). N-linked (GlcNAc...) asparagine glycans are attached at residues asparagine 341 and asparagine 359.

It belongs to the oxygen-dependent FAD-linked oxidoreductase family. Requires FAD as cofactor. In terms of processing, the FAD cofactor is bound via a bicovalent 6-S-cysteinyl, 8alpha-N1-histidyl FAD linkage.

It localises to the secreted. It is found in the cell wall. The chain is Berberine bridge enzyme-like 19 from Arabidopsis thaliana (Mouse-ear cress).